A 390-amino-acid chain; its full sequence is Lipid-A-disaccharide synthase (390 aa).

This sequence belongs to the LpxB family.

The catalysed reaction is a lipid X + a UDP-2-N,3-O-bis[(3R)-3-hydroxyacyl]-alpha-D-glucosamine = a lipid A disaccharide + UDP + H(+). Its pathway is bacterial outer membrane biogenesis; LPS lipid A biosynthesis. Functionally, condensation of UDP-2,3-diacylglucosamine and 2,3-diacylglucosamine-1-phosphate to form lipid A disaccharide, a precursor of lipid A, a phosphorylated glycolipid that anchors the lipopolysaccharide to the outer membrane of the cell. The chain is Lipid-A-disaccharide synthase from Neisseria gonorrhoeae (strain ATCC 700825 / FA 1090).